Reading from the N-terminus, the 207-residue chain is Nucleoplasmin-2 (207 aa).

Residues Met-1–Lys-15 show a composition bias toward polar residues. 2 disordered regions span residues Met-1–Gly-20 and Asp-121–Lys-207. Residues Thr-123–Leu-147 are compositionally biased toward acidic residues. An acidic tract A2 region spans residues Glu-129–Val-152. Positions Ser-165–Val-180 match the Bipartite nuclear localization signal motif. Residues Pro-198–Lys-207 are compositionally biased toward basic residues.

It belongs to the nucleoplasmin family. Homopentamer, when bound to H2A-H2B dimers only. Homodecamer of two stacked pentamers, when bound to H2A-H2B dimers and H3-H4 tetramers simultaneously. As to expression, ovary specific.

It is found in the nucleus. Its function is as follows. Core histones chaperone involved in chromatin reprogramming, specially during fertilization and early embryonic development. Probably involved in sperm DNA decondensation during fertilization. This is Nucleoplasmin-2 (Npm2) from Mus musculus (Mouse).